An 84-amino-acid chain; its full sequence is Anthracycline acyl carrier protein DauA (84 aa).

Residues 3–80 (ELSLAELREI…SMLIFVNERL (78 aa)) enclose the Carrier domain. Ser40 bears the O-(pantetheine 4'-phosphoryl)serine mark.

Its pathway is antibiotic biosynthesis; daunorubicin biosynthesis. The protein operates within antibiotic biosynthesis; carminomycin biosynthesis. It functions in the pathway antibiotic biosynthesis; rhodomycin biosynthesis. It participates in antibiotic biosynthesis; aclacinomycin biosynthesis. Involved in the biosynthesis of aklanonate which is an important precursor common to the formation of the clinically significant anthracyclines such as carminomycin, daunorubicin (daunomycin), rhodomycin, aclacinomycin T (aklavin) and aclacinomycin A (aclarubicin). These compounds are aromatic polyketide antibiotics that exhibit high cytotoxicity and are widely applied in the chemotherapy of a variety of cancers. In Streptomyces sp. (strain C5), this protein is Anthracycline acyl carrier protein DauA (dauA).